Reading from the N-terminus, the 484-residue chain is Protein nucleotidyltransferase YdiU (484 aa).

Residues Gly-81, Gly-83, Arg-84, Lys-103, Asp-115, Gly-116, Arg-166, and Arg-173 each coordinate ATP. Asp-244 serves as the catalytic Proton acceptor. Residues Asn-245 and Asp-254 each coordinate Mg(2+). Asp-254 contacts ATP.

Belongs to the SELO family. Mg(2+) is required as a cofactor. Mn(2+) serves as cofactor.

The enzyme catalyses L-seryl-[protein] + ATP = 3-O-(5'-adenylyl)-L-seryl-[protein] + diphosphate. The catalysed reaction is L-threonyl-[protein] + ATP = 3-O-(5'-adenylyl)-L-threonyl-[protein] + diphosphate. It catalyses the reaction L-tyrosyl-[protein] + ATP = O-(5'-adenylyl)-L-tyrosyl-[protein] + diphosphate. It carries out the reaction L-histidyl-[protein] + UTP = N(tele)-(5'-uridylyl)-L-histidyl-[protein] + diphosphate. The enzyme catalyses L-seryl-[protein] + UTP = O-(5'-uridylyl)-L-seryl-[protein] + diphosphate. The catalysed reaction is L-tyrosyl-[protein] + UTP = O-(5'-uridylyl)-L-tyrosyl-[protein] + diphosphate. Nucleotidyltransferase involved in the post-translational modification of proteins. It can catalyze the addition of adenosine monophosphate (AMP) or uridine monophosphate (UMP) to a protein, resulting in modifications known as AMPylation and UMPylation. The polypeptide is Protein nucleotidyltransferase YdiU (Shewanella sp. (strain MR-4)).